The following is a 122-amino-acid chain: UPF0102 protein VV1_0590 (122 aa).

Belongs to the UPF0102 family.

This Vibrio vulnificus (strain CMCP6) protein is UPF0102 protein VV1_0590.